The following is a 747-amino-acid chain: Internal virion protein gp15 (747 aa).

Belongs to the T7virus internal virion protein gp15 family. In terms of assembly, homooctamer. Interacts with gp16; after ejection the gp15-gp16 complex composed of a gp15 octamer and a gp16 tetramer probably binds both the viral DNA and the host inner membrane. Interacts with gp14.

It localises to the virion. The protein localises to the host periplasm. Component of the cylindrical core that assembles on the inner surface of the capsid during capsid formation and plays a role in viral DNA ejection into the host cell. The inner core is composed of stacked rings of gp14, gp15 and gp16 proteins. Following binding to the host cell surface, the internal core is disassembled and gp15 is ejected along with gp14 and gp16 into the infected cell. Gp15 probably remains associated with gp16. The gp15-gp16 complex binds to both the viral DNA and the host inner membrane, probably escorting the leading end of the genome through the periplasm and controlling the extend of DNA translocated into the host cell. This is Internal virion protein gp15 from Escherichia phage T7 (Bacteriophage T7).